A 350-amino-acid chain; its full sequence is Sperm equatorial segment protein 1 (350 aa).

The signal sequence occupies residues 1 to 19; the sequence is MKPLVLLVALLLWPSSVPA. A glycan (N-linked (GlcNAc...) asparagine) is linked at Asn-128.

Belongs to the SPESP1 family. Glycosylated. In testis there are two predominant forms of 77- and 67-kDa and a form of 47-kDa, whereas in epididymal sperm from caput, corpus, and cauda there are two forms of 47- and 43-kDa. Testis forms contain complex carbohydrate residues. Epididymal sperm forms are N-glycosylated. Then undergoes significant glycosylation in the testis and that the majority of these glycoconjugates are removed by the time sperm reach the caput epididymis. In terms of tissue distribution, highly expressed in testis, where it is localized in the acrosome of postmeiotic stages of spermiogenesis (round and elongating spermatids and in ejaculated spermatozoa) (at protein level). Poorly expressed in placenta and fetal lung.

Its subcellular location is the cytoplasmic vesicle. The protein resides in the secretory vesicle. It localises to the acrosome. In terms of biological role, involved in fertilization ability of sperm. The polypeptide is Sperm equatorial segment protein 1 (Homo sapiens (Human)).